We begin with the raw amino-acid sequence, 90 residues long: MSVKIRLTRMGSKKKPFYRINVADSRAPRDGKFIETVGTYNPLVTENQVTLKEERVLEWLSNGAQPSDTVRNLLSKAGVMKKFHESKLSK.

It belongs to the bacterial ribosomal protein bS16 family.

This is Small ribosomal subunit protein bS16 from Lactococcus lactis subsp. cremoris (strain MG1363).